A 119-amino-acid polypeptide reads, in one-letter code: U-scoloptoxin(01)-Cw1a (119 aa).

The N-terminal stretch at methionine 1–threonine 22 is a signal peptide. The region spanning serine 38 to aspartate 96 is the Chitin-binding type-2 domain. Residues cysteine 73 and cysteine 86 are joined by a disulfide bond.

The protein belongs to the scoloptoxin-01 family. Contains 3 disulfide bonds. As to expression, expressed by the venom gland.

It localises to the secreted. This Cormocephalus westwoodi (Westwood's green centipede) protein is U-scoloptoxin(01)-Cw1a.